Here is a 736-residue protein sequence, read N- to C-terminus: Myosin-7 (736 aa).

One can recognise a Myosin motor domain in the interval 1 to 342 (NWMVTRINAT…LLGLLEEMRD (342 aa)). The interval 219–241 (LNKLMTNLRSTHPHFVRCIIPNE) is actin-binding. The 30-residue stretch at 345-374 (LSRIITRIQAQSRGVLSRMEYKKLLERRDS) folds into the IQ domain. The stretch at 403 to 736 (LLKSAETEKE…MNKKREAEFQ (334 aa)) forms a coiled coil. At Ser701 the chain carries Phosphoserine. The segment at 716–736 (EAGGATSVQIEMNKKREAEFQ) is disordered. Residues 727-736 (MNKKREAEFQ) are compositionally biased toward basic and acidic residues.

Belongs to the TRAFAC class myosin-kinesin ATPase superfamily. Myosin family. Muscle myosin is a hexameric protein that consists of 2 heavy chain subunits (MHC), 2 alkali light chain subunits (MLC) and 2 regulatory light chain subunits (MLC-2). Interacts with ECPAS. Interacts (via C-terminus) with LRRC39.

The protein localises to the cytoplasm. The protein resides in the myofibril. Its subcellular location is the sarcomere. In terms of biological role, myosins are actin-based motor molecules with ATPase activity essential for muscle contraction. Forms regular bipolar thick filaments that, together with actin thin filaments, constitute the fundamental contractile unit of skeletal and cardiac muscle. This chain is Myosin-7 (MYH7), found in Oryctolagus cuniculus (Rabbit).